We begin with the raw amino-acid sequence, 442 residues long: 5-methylthioadenosine/S-adenosylhomocysteine deaminase (442 aa).

The Zn(2+) site is built by His70 and His72. Glu99 and His191 together coordinate substrate. Position 218 (His218) interacts with Zn(2+). Substrate contacts are provided by Glu221 and Asp306. A Zn(2+)-binding site is contributed by Asp306.

It belongs to the metallo-dependent hydrolases superfamily. MTA/SAH deaminase family. Zn(2+) serves as cofactor.

The catalysed reaction is S-adenosyl-L-homocysteine + H2O + H(+) = S-inosyl-L-homocysteine + NH4(+). It carries out the reaction S-methyl-5'-thioadenosine + H2O + H(+) = S-methyl-5'-thioinosine + NH4(+). Its function is as follows. Catalyzes the deamination of 5-methylthioadenosine and S-adenosyl-L-homocysteine into 5-methylthioinosine and S-inosyl-L-homocysteine, respectively. Is also able to deaminate adenosine. In Nitratidesulfovibrio vulgaris (strain DP4) (Desulfovibrio vulgaris), this protein is 5-methylthioadenosine/S-adenosylhomocysteine deaminase.